A 161-amino-acid chain; its full sequence is M-phase phosphoprotein 6 (161 aa).

Glycyl lysine isopeptide (Lys-Gly) (interchain with G-Cter in SUMO2) cross-links involve residues lysine 37 and lysine 86. Serine 111 carries the phosphoserine modification. A Nuclear localization signal motif is present at residues 117–134; the sequence is RRYETLVGTIGKKFVKKR. Glycyl lysine isopeptide (Lys-Gly) (interchain with G-Cter in SUMO2) cross-links involve residues lysine 128, lysine 151, and lysine 154.

The protein belongs to the MPP6 family. Associates with the RNA exosome complex, mediated by EXOSC3. Interacts with ARHGAP18. Interacts with exosome cofactors EXOSC10 and MTREX. Post-translationally, phosphorylated in M (mitotic) phase.

Its subcellular location is the nucleus. It localises to the nucleolus. The protein localises to the cytoplasm. Its function is as follows. RNA-binding protein that associates with the RNA exosome complex. Involved in the 3'-processing of the 7S pre-RNA to the mature 5.8S rRNA and plays a role in recruiting the RNA exosome complex to pre-rRNA; this function may include C1D. The protein is M-phase phosphoprotein 6 of Mus musculus (Mouse).